Here is a 104-residue protein sequence, read N- to C-terminus: MIRKAFVMQVNADAHEEYQRRHNPIWPELEAVLKSHGAHHYAIYLDQERNLLFATVEIESEERWNAVASTDVCQRWWKHMRDVMPANPDNSPASAELKEVFYLQ.

Tyrosine 18 lines the substrate pocket. Residue histidine 22 is the Proton donor of the active site. Substrate-binding positions include tyrosine 41 and 76 to 77; that span reads WW.

It belongs to the rhamnose mutarotase family. In terms of assembly, homodimer.

It localises to the cytoplasm. The enzyme catalyses alpha-L-rhamnose = beta-L-rhamnose. Its pathway is carbohydrate metabolism; L-rhamnose metabolism. Functionally, involved in the anomeric conversion of L-rhamnose. The protein is L-rhamnose mutarotase of Salmonella newport (strain SL254).